The sequence spans 287 residues: Elongation factor Ts (287 aa).

The segment at 80–83 (TDFL) is involved in Mg(2+) ion dislocation from EF-Tu.

It belongs to the EF-Ts family.

The protein localises to the cytoplasm. Functionally, associates with the EF-Tu.GDP complex and induces the exchange of GDP to GTP. It remains bound to the aminoacyl-tRNA.EF-Tu.GTP complex up to the GTP hydrolysis stage on the ribosome. This is Elongation factor Ts from Pseudomonas entomophila (strain L48).